The primary structure comprises 612 residues: Poly(A) RNA polymerase, mitochondrial (612 aa).

The transit peptide at 1-57 (MNSLVRRSAQQLSLWRTYCIKHNASEAASPGRNAGRPNYEEFIGRHQRQAQCSIVVQ) directs the protein to the mitochondrion. ATP is bound by residues 83-89 (YCVRQDE) and 228-229 (GC). Mg(2+) is bound by residues Asp-230 and Asp-232. One can recognise a PAP-associated domain in the interval 427–463 (SLSELLLQFFEFYSQFDFHNRAISLNEGKPLSKPDHS). Disordered regions lie at residues 555 to 574 (AGATSSSTPPTPAITYKSAS) and 588 to 612 (SELKQLRGSGSSVPTSSPNNRRRSR).

It belongs to the DNA polymerase type-B-like family. Mg(2+) is required as a cofactor. The cofactor is Mn(2+).

It is found in the mitochondrion. The catalysed reaction is RNA(n) + ATP = RNA(n)-3'-adenine ribonucleotide + diphosphate. Polymerase that creates the 3' poly(A) tail of mitochondrial transcripts. This is not required for transcript stability or translation but may maintain mRNA integrity by protecting 3' termini from degradation. The sequence is that of Poly(A) RNA polymerase, mitochondrial from Drosophila melanogaster (Fruit fly).